The primary structure comprises 272 residues: Hemin import ATP-binding protein HmuV (272 aa).

Positions 2–255 (LNADHLHVAR…EPIARCYGFR (254 aa)) constitute an ABC transporter domain. 34–41 (GRNGAGKS) contacts ATP.

The protein belongs to the ABC transporter superfamily. Heme (hemin) importer (TC 3.A.1.14.5) family. In terms of assembly, the complex is composed of two ATP-binding proteins (HmuV), two transmembrane proteins (HmuU) and a solute-binding protein (HmuT).

Its subcellular location is the cell inner membrane. Functionally, part of the ABC transporter complex HmuTUV involved in hemin import. Responsible for energy coupling to the transport system. This is Hemin import ATP-binding protein HmuV from Burkholderia mallei (strain ATCC 23344).